A 239-amino-acid chain; its full sequence is tRNA (guanine-N(1)-)-methyltransferase (239 aa).

S-adenosyl-L-methionine is bound by residues Gly-108 and 127-132; that span reads LGDYVL.

This sequence belongs to the RNA methyltransferase TrmD family. In terms of assembly, homodimer.

The protein localises to the cytoplasm. It carries out the reaction guanosine(37) in tRNA + S-adenosyl-L-methionine = N(1)-methylguanosine(37) in tRNA + S-adenosyl-L-homocysteine + H(+). Functionally, specifically methylates guanosine-37 in various tRNAs. This chain is tRNA (guanine-N(1)-)-methyltransferase, found in Streptococcus pneumoniae (strain JJA).